Reading from the N-terminus, the 485-residue chain is Aerolysin-5 (485 aa).

The first 23 residues, 1-23 (MQKLKITGLSLIISGLLMAQRHA), serve as a signal peptide directing secretion. 2 disulfide bridges follow: Cys42–Cys98 and Cys182–Cys187. The interval 68 to 84 (WQISGLANGWVIMGPVY) is interaction with host N-linked glycan. The tract at residues 256–288 (YGLSEKVTTKNKFKWPLVGETELSIEIAANQSW) is part of the transmembrane beta-barrel after proteolytic activation of the toxin and insertion into the host membrane. Positions 346 to 355 (RWGGNAWYTH) are interaction with glycans from host GPI-anchor. Positions 446-485 (AADGKAPRALSARRGEQGLRLAIPLECRKSSPGLASATSA) are excised as a propeptide.

It belongs to the aerolysin family. As to quaternary structure, homodimer in solution; homoheptamer in the host membrane. After binding to GPI-anchored proteins in target membranes and proteolytic removal of the C-terminal propeptide, the protein assembles into a heptameric pre-pore complex. A further conformation change leads to insertion into the host membrane. In terms of processing, proteolytic cleavage and subsequent release of the propeptide trigger a major conformation change, leading to the formation of a heptameric pre-pore that then inserts into the host membrane.

The protein resides in the secreted. It is found in the host cell membrane. Its function is as follows. Secreted, cytolytic toxin that forms pores in host membranes after proteolytic removal of a C-terminal propeptide, leading to destruction of the membrane permeability barrier and cell death. The pores are formed by transmembrane beta-strands and are approximately 3 nm in diameter. The sequence is that of Aerolysin-5 (ahh5) from Aeromonas hydrophila.